Reading from the N-terminus, the 365-residue chain is uncharacterized protein (365 aa).

It belongs to the NAD(P)-dependent epimerase/dehydratase family.

The protein localises to the cytoplasm. Its subcellular location is the nucleus. This is an uncharacterized protein from Schizosaccharomyces pombe (strain 972 / ATCC 24843) (Fission yeast).